The chain runs to 107 residues: UPF0060 membrane protein glr4174 (107 aa).

The next 4 helical transmembrane spans lie at 1–21, 26–46, 58–78, and 87–107; these read MALL…FAFW, LGKN…FAWL, AYAA…WLVE, and LAGA…DRSP.

Belongs to the UPF0060 family.

It localises to the cell inner membrane. In Gloeobacter violaceus (strain ATCC 29082 / PCC 7421), this protein is UPF0060 membrane protein glr4174.